Consider the following 336-residue polypeptide: D-alanine--D-alanine ligase (336 aa).

The region spanning 124 to 330 (KMWFSALGIP…FTEYLSLVIN (207 aa)) is the ATP-grasp domain. Residue 154–209 (ALENWGSIFVKAASQGSSVGCYKVDDSSKVAGVLKDAFGYAPYVIVEKTIKARELE) participates in ATP binding. Mg(2+)-binding residues include aspartate 284, glutamate 297, and asparagine 299.

Belongs to the D-alanine--D-alanine ligase family. The cofactor is Mg(2+). Requires Mn(2+) as cofactor.

The protein resides in the cytoplasm. It carries out the reaction 2 D-alanine + ATP = D-alanyl-D-alanine + ADP + phosphate + H(+). It functions in the pathway cell wall biogenesis; peptidoglycan biosynthesis. Cell wall formation. This chain is D-alanine--D-alanine ligase, found in Shewanella sp. (strain MR-4).